The following is a 320-amino-acid chain: Malate dehydrogenase (320 aa).

NAD(+) is bound by residues 10–15 (GAGQIG) and D34. Residues R83 and R89 each contribute to the substrate site. NAD(+) is bound by residues N96 and 119-121 (ITN). Residues N121 and R152 each coordinate substrate. H176 serves as the catalytic Proton acceptor.

The protein belongs to the LDH/MDH superfamily. MDH type 3 family.

It carries out the reaction (S)-malate + NAD(+) = oxaloacetate + NADH + H(+). In terms of biological role, catalyzes the reversible oxidation of malate to oxaloacetate. The polypeptide is Malate dehydrogenase (Cereibacter sphaeroides (strain ATCC 17025 / ATH 2.4.3) (Rhodobacter sphaeroides)).